Consider the following 223-residue polypeptide: Lipoprotein signal peptidase (223 aa).

The interval Met-1–Ser-20 is disordered. A run of 4 helical transmembrane segments spans residues Leu-32 to Phe-52, Trp-65 to Leu-85, Leu-91 to Phe-111, and Ser-116 to Asp-136. Active-site residues include Asp-156 and Asp-175. The helical transmembrane segment at Ile-173–Pro-193 threads the bilayer. The disordered stretch occupies residues Pro-196–Ser-223.

It belongs to the peptidase A8 family.

It is found in the cell inner membrane. The enzyme catalyses Release of signal peptides from bacterial membrane prolipoproteins. Hydrolyzes -Xaa-Yaa-Zaa-|-(S,diacylglyceryl)Cys-, in which Xaa is hydrophobic (preferably Leu), and Yaa (Ala or Ser) and Zaa (Gly or Ala) have small, neutral side chains.. Its pathway is protein modification; lipoprotein biosynthesis (signal peptide cleavage). Its function is as follows. This protein specifically catalyzes the removal of signal peptides from prolipoproteins. The protein is Lipoprotein signal peptidase of Rhodopirellula baltica (strain DSM 10527 / NCIMB 13988 / SH1).